The primary structure comprises 266 residues: Manganese catalase (266 aa).

Glu-35 provides a ligand contact to Mn(2+). Residues Asp-57 and Asp-61 each contribute to the Ca(2+) site. 4 residues coordinate Mn(2+): Glu-66, His-69, Glu-148, and His-181. Positions 218, 220, and 222 each coordinate Ca(2+). Residues 243-266 (ENPEAMGGIPHIKPGDPRLHNHQG) are disordered. Basic and acidic residues predominate over residues 255 to 266 (KPGDPRLHNHQG).

This sequence belongs to the manganese catalase family. In terms of assembly, homohexamer. Ca(2+) is required as a cofactor. Mn(2+) serves as cofactor.

The catalysed reaction is 2 H2O2 = O2 + 2 H2O. Functionally, catalyzes the decomposition of hydrogen peroxide into water and oxygen. The protein is Manganese catalase of Lactiplantibacillus plantarum (Lactobacillus plantarum).